The chain runs to 47 residues: Snake venom metalloproteinase jararafibrase-4 (47 aa).

The 42-residue stretch at R6–L47 folds into the Peptidase M12B domain. E9 provides a ligand contact to Ca(2+).

This sequence belongs to the venom metalloproteinase (M12B) family. As to quaternary structure, monomer. It depends on Zn(2+) as a cofactor. Expressed by the venom gland.

The protein localises to the secreted. With respect to regulation, inhibited by 1,10-phenanthroline and EDTA. Its function is as follows. The metalloproteinase is a probable venom zinc protease that induces local hemorrhage in the skin of rats. Degrades type-IV collagen, gelatin, laminin and fibronectin. Has fibrinolytic activities. Has high hemagglutinating activity on red blood cells. Cleaves insulin B chain at 29-His-|-Leu-30, and 38-Ala-|-Leu-39 bonds. The protein is Snake venom metalloproteinase jararafibrase-4 of Bothrops jararaca (Jararaca).